Reading from the N-terminus, the 493-residue chain is Vacuolar-processing enzyme (493 aa).

The signal sequence occupies residues Met1 to Leu19. Asn147 carries an N-linked (GlcNAc...) asparagine glycan. Residue His174 is part of the active site. Cys216 acts as the Nucleophile in catalysis. Cys249 and Cys263 are oxidised to a cystine. Asn295 and Asn331 each carry an N-linked (GlcNAc...) asparagine glycan. Cystine bridges form between Cys429–Cys459 and Cys441–Cys476.

This sequence belongs to the peptidase C13 family.

Asparagine-specific endopeptidase involved in the processing of vacuolar seed protein precursors into the mature forms. This is Vacuolar-processing enzyme from Vicia sativa (Spring vetch).